The following is a 319-amino-acid chain: Protein sprouty homolog 1 (319 aa).

The residue at position 1 (M1) is an N-acetylmethionine. Residues 54-157 (TEGPSVVKRP…HRSERAIRTQ (104 aa)) are disordered. Residues 69-79 (PRQEKHERTHE) show a composition bias toward basic and acidic residues. The segment covering 112–131 (SRSTSTGSAASSGSNSSASS) has biased composition (low complexity). An SPR domain is found at 183-295 (QCGKCKCGEC…CYDWIHRPGC (113 aa)).

The protein belongs to the sprouty family. In terms of assembly, forms heterodimers with SPRY2. Interacts with TESK1. Interacts with CAV1 (via C-terminus).

The protein localises to the cytoplasm. Its subcellular location is the membrane. Its function is as follows. Inhibits fibroblast growth factor (FGF)-induced retinal lens fiber differentiation, probably by inhibiting FGF-mediated phosphorylation of ERK1/2. Inhibits TGFB-induced epithelial-to-mesenchymal transition in lens epithelial cells. This Bos taurus (Bovine) protein is Protein sprouty homolog 1 (SPRY1).